A 571-amino-acid polypeptide reads, in one-letter code: Leiomodin-3 (571 aa).

3 disordered regions span residues Met1 to Pro29, Pro46 to Asn67, and Pro91 to Asp228. Residues Gln10–Leu23 show a composition bias toward acidic residues. Residues Phe94–Arg105 are compositionally biased toward polar residues. Positions Leu119 to Ser134 are enriched in basic and acidic residues. Acidic residues predominate over residues Glu142 to Glu179. Positions Gln180–Ile192 are enriched in basic and acidic residues. Over residues His193–Thr204 the composition is skewed to polar residues. Positions Thr206–Asp228 are enriched in basic and acidic residues. A coiled-coil region spans residues Val397 to Gly436. A WH2 domain is found at Pro545–Val564.

This sequence belongs to the tropomodulin family. In terms of assembly, may interact with tropomyosin alpha (TPM1/2) N-terminus. Interacts with KLHL40; leading to stabilization. Ubiquitinated, leading to its degradation. Interaction with KLHL40 negatively regulates ubiquitination and degradation. In terms of tissue distribution, skeletal muscle and heart-specific (at protein level).

It is found in the cytoplasm. Its subcellular location is the myofibril. The protein localises to the sarcomere. It localises to the a band. The protein resides in the m line. It is found in the cytoskeleton. In terms of biological role, essential for the organization of sarcomeric actin thin filaments in skeletal muscle. Increases the rate of actin polymerization. The protein is Leiomodin-3 of Mus musculus (Mouse).